The sequence spans 274 residues: Formamidopyrimidine-DNA glycosylase (274 aa).

Pro2 acts as the Schiff-base intermediate with DNA in catalysis. The active-site Proton donor is Glu3. Lys56 functions as the Proton donor; for beta-elimination activity in the catalytic mechanism. 3 residues coordinate DNA: His89, Arg107, and Lys148. The FPG-type zinc-finger motif lies at 233-267 (LAYGRAREMCVNCETTLENLKLGQRASVFCPQCQP). Arg257 functions as the Proton donor; for delta-elimination activity in the catalytic mechanism.

The protein belongs to the FPG family. As to quaternary structure, monomer. Zn(2+) is required as a cofactor.

The enzyme catalyses Hydrolysis of DNA containing ring-opened 7-methylguanine residues, releasing 2,6-diamino-4-hydroxy-5-(N-methyl)formamidopyrimidine.. It catalyses the reaction 2'-deoxyribonucleotide-(2'-deoxyribose 5'-phosphate)-2'-deoxyribonucleotide-DNA = a 3'-end 2'-deoxyribonucleotide-(2,3-dehydro-2,3-deoxyribose 5'-phosphate)-DNA + a 5'-end 5'-phospho-2'-deoxyribonucleoside-DNA + H(+). In terms of biological role, involved in base excision repair of DNA damaged by oxidation or by mutagenic agents. Acts as a DNA glycosylase that recognizes and removes damaged bases. Has a preference for oxidized purines, such as 7,8-dihydro-8-oxoguanine (8-oxoG). Has AP (apurinic/apyrimidinic) lyase activity and introduces nicks in the DNA strand. Cleaves the DNA backbone by beta-delta elimination to generate a single-strand break at the site of the removed base with both 3'- and 5'-phosphates. In Acinetobacter baumannii (strain SDF), this protein is Formamidopyrimidine-DNA glycosylase.